Here is a 474-residue protein sequence, read N- to C-terminus: MFDKKLLESSELYDKRYRNFSTLIILPLFILLVGGVIFTFFAHKELTVISTGSIEPTKIVAKIQSTNANPIIENNLKEGEAVKENSLLLKYNGTPEQTQLSELLTQKKQALDKKVQLDLLQRSLTNEKNEFPTADSFGYEKSFENYEAQVKSLEATIQKSNQAVEDQNKSTESQKQAIQNQVATLQQAIQNYSEIENAVSSGGGVSQDNPYLSQYNSYQAQQATLEADLKNQKNPDETAKQAAKSQEESLKSQFLSGLASSKDSLKSQIQSFNVQESSLTGSNAYDNSQSSQILTLKSQALSASNKEMTDLNSTLTDLETKISLQKQDDQYSQVFAEQAGVLHVLPDILGMKKIPIGTPIAEIYPLLKSETQVNLTSYIPSTQISGMKVGQKVRFTVQQNLPQPEILTGIINQIDSAPTAFKEGNAYKVSATTTINAKDLPNIRYGLQGKTVTIIGKKTYFNYFLDKIMGRGNQ.

Residues 1-21 (MFDKKLLESSELYDKRYRNFS) lie on the Cytoplasmic side of the membrane. Residues 22 to 44 (TLIILPLFILLVGGVIFTFFAHK) form a helical membrane-spanning segment. Over 45 to 474 (ELTVISTGSI…LDKIMGRGNQ (430 aa)) the chain is Extracellular.

It belongs to the membrane fusion protein (MFP) (TC 8.A.1) family.

It localises to the cell membrane. Functionally, involved in the secretion of lactococcin A. This Lactococcus lactis subsp. cremoris (Streptococcus cremoris) protein is Lactococcin A secretion protein LcnD (lcnD).